We begin with the raw amino-acid sequence, 143 residues long: Large ribosomal subunit protein uL11 (143 aa).

The protein belongs to the universal ribosomal protein uL11 family. Part of the ribosomal stalk of the 50S ribosomal subunit. Interacts with L10 and the large rRNA to form the base of the stalk. L10 forms an elongated spine to which L12 dimers bind in a sequential fashion forming a multimeric L10(L12)X complex. In terms of processing, one or more lysine residues are methylated.

Its function is as follows. Forms part of the ribosomal stalk which helps the ribosome interact with GTP-bound translation factors. The chain is Large ribosomal subunit protein uL11 from Cellvibrio japonicus (strain Ueda107) (Pseudomonas fluorescens subsp. cellulosa).